Here is a 704-residue protein sequence, read N- to C-terminus: Elongation factor G (704 aa).

Residues 8 to 290 (ARYRNIGISA…AVIDYLPSPV (283 aa)) enclose the tr-type G domain. Residues 17–24 (AHIDAGKT), 88–92 (DTPGH), and 142–145 (NKMD) each bind GTP. N6-acetyllysine occurs at positions 504 and 643.

This sequence belongs to the TRAFAC class translation factor GTPase superfamily. Classic translation factor GTPase family. EF-G/EF-2 subfamily.

The protein resides in the cytoplasm. Functionally, catalyzes the GTP-dependent ribosomal translocation step during translation elongation. During this step, the ribosome changes from the pre-translocational (PRE) to the post-translocational (POST) state as the newly formed A-site-bound peptidyl-tRNA and P-site-bound deacylated tRNA move to the P and E sites, respectively. Catalyzes the coordinated movement of the two tRNA molecules, the mRNA and conformational changes in the ribosome. The chain is Elongation factor G from Escherichia coli O17:K52:H18 (strain UMN026 / ExPEC).